We begin with the raw amino-acid sequence, 353 residues long: Holliday junction branch migration complex subunit RuvB (353 aa).

The segment at Ala4 to Tyr185 is large ATPase domain (RuvB-L). ATP is bound by residues Ile24, Arg25, Gly66, Lys69, Thr70, Thr71, Glu132–Phe134, Arg175, Tyr185, and Arg222. Thr70 contacts Mg(2+). The small ATPAse domain (RuvB-S) stretch occupies residues Asn186–Asp256. The tract at residues Glu259–Leu353 is head domain (RuvB-H). DNA-binding residues include Arg295, Arg314, and Arg319.

Belongs to the RuvB family. As to quaternary structure, homohexamer. Forms an RuvA(8)-RuvB(12)-Holliday junction (HJ) complex. HJ DNA is sandwiched between 2 RuvA tetramers; dsDNA enters through RuvA and exits via RuvB. An RuvB hexamer assembles on each DNA strand where it exits the tetramer. Each RuvB hexamer is contacted by two RuvA subunits (via domain III) on 2 adjacent RuvB subunits; this complex drives branch migration. In the full resolvosome a probable DNA-RuvA(4)-RuvB(12)-RuvC(2) complex forms which resolves the HJ.

The protein resides in the cytoplasm. The catalysed reaction is ATP + H2O = ADP + phosphate + H(+). Functionally, the RuvA-RuvB-RuvC complex processes Holliday junction (HJ) DNA during genetic recombination and DNA repair, while the RuvA-RuvB complex plays an important role in the rescue of blocked DNA replication forks via replication fork reversal (RFR). RuvA specifically binds to HJ cruciform DNA, conferring on it an open structure. The RuvB hexamer acts as an ATP-dependent pump, pulling dsDNA into and through the RuvAB complex. RuvB forms 2 homohexamers on either side of HJ DNA bound by 1 or 2 RuvA tetramers; 4 subunits per hexamer contact DNA at a time. Coordinated motions by a converter formed by DNA-disengaged RuvB subunits stimulates ATP hydrolysis and nucleotide exchange. Immobilization of the converter enables RuvB to convert the ATP-contained energy into a lever motion, pulling 2 nucleotides of DNA out of the RuvA tetramer per ATP hydrolyzed, thus driving DNA branch migration. The RuvB motors rotate together with the DNA substrate, which together with the progressing nucleotide cycle form the mechanistic basis for DNA recombination by continuous HJ branch migration. Branch migration allows RuvC to scan DNA until it finds its consensus sequence, where it cleaves and resolves cruciform DNA. This is Holliday junction branch migration complex subunit RuvB from Pseudomonas syringae pv. tomato (strain ATCC BAA-871 / DC3000).